The primary structure comprises 1026 residues: SWI/SNF-related matrix-associated actin-dependent regulator of chromatin subfamily A containing DEAD/H box 1 (1026 aa).

Met1 bears the N-acetylmethionine mark. Residues 1 to 82 (MNLFNLDRFR…DNERKASISY (82 aa)) form a disordered region. Over residues 7-19 (DRFRFEKRNKIEE) the composition is skewed to basic and acidic residues. Position 54 is a phosphothreonine (Thr54). Ser57 is modified (phosphoserine). Thr71 is subject to Phosphothreonine. Lys77 participates in a covalent cross-link: Glycyl lysine isopeptide (Lys-Gly) (interchain with G-Cter in SUMO2). Phosphoserine is present on Ser79. Lys84 is covalently cross-linked (Glycyl lysine isopeptide (Lys-Gly) (interchain with G-Cter in SUMO2)). Phosphoserine occurs at positions 124, 127, 132, 146, and 152. Positions 157–199 (LKDAKLQTLKELFPQRSDNDLLKLIESTSTMDGAIAAALLMFG) constitute a CUE 1 domain. Disordered stretches follow at residues 203–251 (GGPR…NWEK) and 302–328 (SQSEVPNGKEVSSRSQNYPKNATKTKL). A phosphoserine mark is found at Ser211 and Ser214. At Tyr217 the chain carries Phosphotyrosine. A compositionally biased stretch (basic and acidic residues) spans 226–238 (QSIKKTRLDHGEE). Ser239 and Ser242 each carry phosphoserine. A CUE 2 domain is found at 251–294 (KQESIVLKLQKEFPNFDKQELREVLKEHEWMYTEALESLKVFAE). A Phosphoserine modification is found at Ser302. A compositionally biased stretch (polar residues) spans 314 to 323 (SRSQNYPKNA). Lys335 is covalently cross-linked (Glycyl lysine isopeptide (Lys-Gly) (interchain with G-Cter in SUMO2)). The interval 354–373 (VVEDSEYDSGSDVGSSLDED) is disordered. Lys471 is covalently cross-linked (Glycyl lysine isopeptide (Lys-Gly) (interchain with G-Cter in SUMO2)). The Helicase ATP-binding domain maps to 509 to 677 (ALVHKHGLNG…MSLLNFVMPH (169 aa)). 521-529 (ADEMGLGKT) is a binding site for ATP. The DEGH box motif lies at 628-631 (DEGH). Residues 721-738 (RRVKEEVLKQLPPKKDRI) carry the Nuclear localization signal motif. Lys724 is covalently cross-linked (Glycyl lysine isopeptide (Lys-Gly) (interchain with G-Cter in SUMO2)). A Helicase C-terminal domain is found at 858–1010 (VLGCILSELK…MTTVDEGDEG (153 aa)). ATP is bound at residue 897–904 (YLRLDGKT). Lys996 is covalently cross-linked (Glycyl lysine isopeptide (Lys-Gly) (interchain with G-Cter in SUMO2)). The DEGD box motif lies at 1005-1008 (DEGD).

The protein belongs to the SNF2/RAD54 helicase family. In terms of assembly, binds to DNA preferentially in the vicinity of transcriptional start sites. Interacts with MSH2 and TRIM28. Part of a complex composed of TRIM28, HDAC1, HDAC2 and EHMT2. Interacts with PCNA. As to expression, isoform 1 is expressed ubiquitously. Isoform 3 is expressed mainly in skin and esophagus. Expressed in fibroblasts and keratinocytes (at protein level).

The protein localises to the nucleus. Its subcellular location is the chromosome. The enzyme catalyses ATP + H2O = ADP + phosphate + H(+). Its function is as follows. DNA helicase that possesses intrinsic ATP-dependent nucleosome-remodeling activity and is both required for DNA repair and heterochromatin organization. Promotes DNA end resection of double-strand breaks (DSBs) following DNA damage: probably acts by weakening histone DNA interactions in nucleosomes flanking DSBs. Required for the restoration of heterochromatin organization after replication. Acts at replication sites to facilitate the maintenance of heterochromatin by directing H3 and H4 histones deacetylation, H3 'Lys-9' trimethylation (H3K9me3) and restoration of silencing. The protein is SWI/SNF-related matrix-associated actin-dependent regulator of chromatin subfamily A containing DEAD/H box 1 of Homo sapiens (Human).